Consider the following 462-residue polypeptide: S-alkyl-thiohydroximate lyase SUR1 (462 aa).

Belongs to the class-I pyridoxal-phosphate-dependent aminotransferase family. Pyridoxal 5'-phosphate serves as cofactor.

In terms of biological role, C-S lyase involved in glucosinolate biosynthesis. Converts S-(alkylacetohydroximoyl)-L-cysteine to thiohydroximate. Functions in auxin homeostasis. Probably required for glucosinolate activation in response to pathogens. This chain is S-alkyl-thiohydroximate lyase SUR1 (SUR1), found in Arabidopsis thaliana (Mouse-ear cress).